The chain runs to 612 residues: Amyloid-beta precursor-like protein (612 aa).

A signal peptide spans 1 to 21 (MGPSVRPGFLVVVIGLQFVAA). Residues 22 to 542 (SMEVNSRKFE…NLYANSHANS (521 aa)) lie on the Extracellular side of the membrane. Positions 28-122 (RKFEPMVAFI…PFRCLVGPFQ (95 aa)) are GFLD subdomain. Residues 28–189 (RKFEPMVAFI…SGVEFVCCPK (162 aa)) form the E1 domain. 6 disulfides stabilise this stretch: Cys-38/Cys-60, Cys-71/Cys-116, Cys-96/Cys-103, Cys-132/Cys-187, Cys-143/Cys-173, and Cys-157/Cys-186. N-linked (GlcNAc...) asparagine glycans are attached at residues Asn-99, Asn-108, and Asn-150. A cuBD subdomain region spans residues 130 to 189 (EHCIFDHYHDPRVCNEFDQCNETAMSKCSARGMTTQSFAMLWPCQEPGHFSGVEFVCCPK). The E2 domain maps to 223–419 (GDSKYMSKYA…KQVRPNIDKF (197 aa)). Disordered stretches follow at residues 251–276 (ERDT…TDPK) and 437–490 (QEPT…FDSE). 2 stretches are compositionally biased toward basic and acidic residues: residues 439–453 (PTPK…KAED) and 470–483 (KPTE…EDIK). The chain crosses the membrane as a helical span at residues 543 to 563 (VLGIAIGGVVVFIIIVVAVVM). Residues 564 to 612 (LKRRTQRQRVTHGFVEVDPAASPEERHVANMQMSGYENPTYKYFEMQNQ) lie on the Cytoplasmic side of the membrane. The tract at residues 598–612 (GYENPTYKYFEMQNQ) is required for the interaction with kinesin heavy chain and for anterograde transport in axons. A YENPXY motif motif is present at residues 599–604 (YENPTY).

This sequence belongs to the APP family. In terms of assembly, interacts (via cytoplasmic domain) with kinesin heavy chain. Expressed in the cervicothoracic ganglion (stellate ganglion) (at protein level).

The protein localises to the cell membrane. Its subcellular location is the cell projection. It localises to the axon. Its function is as follows. Acts as a kinesin I membrane receptor, thereby playing a role in axonal anterograde transport of cargo towards synapses in axons. The polypeptide is Amyloid-beta precursor-like protein (Doryteuthis pealeii (Longfin inshore squid)).